Reading from the N-terminus, the 248-residue chain is tRNA pseudouridine synthase A (248 aa).

The active-site Nucleophile is the aspartate 52. Tyrosine 111 contacts substrate.

It belongs to the tRNA pseudouridine synthase TruA family. In terms of assembly, homodimer.

The catalysed reaction is uridine(38/39/40) in tRNA = pseudouridine(38/39/40) in tRNA. Its function is as follows. Formation of pseudouridine at positions 38, 39 and 40 in the anticodon stem and loop of transfer RNAs. This chain is tRNA pseudouridine synthase A, found in Methylocella silvestris (strain DSM 15510 / CIP 108128 / LMG 27833 / NCIMB 13906 / BL2).